The following is a 141-amino-acid chain: Putative nickel-responsive regulator (141 aa).

Ni(2+)-binding residues include His80, His91, His93, and Cys99.

It belongs to the transcriptional regulatory CopG/NikR family. In terms of assembly, homotetramer. Ni(2+) serves as cofactor.

Transcriptional regulator. In Methanocaldococcus jannaschii (strain ATCC 43067 / DSM 2661 / JAL-1 / JCM 10045 / NBRC 100440) (Methanococcus jannaschii), this protein is Putative nickel-responsive regulator.